The sequence spans 456 residues: Bifunctional protein GlmU (456 aa).

The segment at 1–229 (MTKKALSAVI…VMEVEGANNR (229 aa)) is pyrophosphorylase. UDP-N-acetyl-alpha-D-glucosamine contacts are provided by residues 11–14 (LAAG), lysine 25, glutamine 76, 81–82 (GT), 103–105 (YGD), glycine 140, glutamate 154, asparagine 169, and asparagine 227. Residue aspartate 105 coordinates Mg(2+). Asparagine 227 contacts Mg(2+). The interval 230 to 250 (LQLAALERYFQNKQASKLLLE) is linker. The tract at residues 251–456 (GVMIYDPARF…QGWQRPIKKK (206 aa)) is N-acetyltransferase. Residues arginine 333 and lysine 351 each contribute to the UDP-N-acetyl-alpha-D-glucosamine site. Histidine 363 (proton acceptor) is an active-site residue. Residues tyrosine 366 and asparagine 377 each coordinate UDP-N-acetyl-alpha-D-glucosamine. Acetyl-CoA is bound by residues alanine 380, 386-387 (NY), serine 405, alanine 423, and arginine 440.

This sequence in the N-terminal section; belongs to the N-acetylglucosamine-1-phosphate uridyltransferase family. It in the C-terminal section; belongs to the transferase hexapeptide repeat family. In terms of assembly, homotrimer. Mg(2+) serves as cofactor.

It localises to the cytoplasm. It carries out the reaction alpha-D-glucosamine 1-phosphate + acetyl-CoA = N-acetyl-alpha-D-glucosamine 1-phosphate + CoA + H(+). The catalysed reaction is N-acetyl-alpha-D-glucosamine 1-phosphate + UTP + H(+) = UDP-N-acetyl-alpha-D-glucosamine + diphosphate. It functions in the pathway nucleotide-sugar biosynthesis; UDP-N-acetyl-alpha-D-glucosamine biosynthesis; N-acetyl-alpha-D-glucosamine 1-phosphate from alpha-D-glucosamine 6-phosphate (route II): step 2/2. It participates in nucleotide-sugar biosynthesis; UDP-N-acetyl-alpha-D-glucosamine biosynthesis; UDP-N-acetyl-alpha-D-glucosamine from N-acetyl-alpha-D-glucosamine 1-phosphate: step 1/1. Its pathway is bacterial outer membrane biogenesis; LPS lipid A biosynthesis. In terms of biological role, catalyzes the last two sequential reactions in the de novo biosynthetic pathway for UDP-N-acetylglucosamine (UDP-GlcNAc). The C-terminal domain catalyzes the transfer of acetyl group from acetyl coenzyme A to glucosamine-1-phosphate (GlcN-1-P) to produce N-acetylglucosamine-1-phosphate (GlcNAc-1-P), which is converted into UDP-GlcNAc by the transfer of uridine 5-monophosphate (from uridine 5-triphosphate), a reaction catalyzed by the N-terminal domain. The polypeptide is Bifunctional protein GlmU (Haemophilus influenzae (strain ATCC 51907 / DSM 11121 / KW20 / Rd)).